The following is a 298-amino-acid chain: MDLSALETEGRNTRTTELDRLTVPELLAVMNDEDRTVASAVRDVLDQIGAAVELITESLRRGGRLIYLGAGTSGRIGLLDAVECPPTFGTTPDQVVGLLSGGPGAFVTAVEGAEDQPERAADDLDAIGVSADDTVVGLAASGRTPYVVGGLQHARGAGAATVSIACNRDALVSRYADVAIEVLTGPEVLTGSTRLKAGTAEKMVCNMLSTASMVRLGKVYGNLMVDVRATNGKLVDRVRRIVVESTGAEPETAEQALAAADGHAKTAIVMLAAGCSADEAARRIERAGGDIRTAIGAG.

An SIS domain is found at 55–218 (ITESLRRGGR…STASMVRLGK (164 aa)). The active-site Proton donor is Glu83. Residue Glu114 is part of the active site.

This sequence belongs to the GCKR-like family. MurNAc-6-P etherase subfamily. In terms of assembly, homodimer.

It catalyses the reaction N-acetyl-D-muramate 6-phosphate + H2O = N-acetyl-D-glucosamine 6-phosphate + (R)-lactate. It functions in the pathway amino-sugar metabolism; N-acetylmuramate degradation. Specifically catalyzes the cleavage of the D-lactyl ether substituent of MurNAc 6-phosphate, producing GlcNAc 6-phosphate and D-lactate. This Mycolicibacterium smegmatis (strain ATCC 700084 / mc(2)155) (Mycobacterium smegmatis) protein is N-acetylmuramic acid 6-phosphate etherase.